Reading from the N-terminus, the 482-residue chain is Glycogen synthase (482 aa).

Lysine 20 serves as a coordination point for ADP-alpha-D-glucose.

It belongs to the glycosyltransferase 1 family. Bacterial/plant glycogen synthase subfamily.

It carries out the reaction [(1-&gt;4)-alpha-D-glucosyl](n) + ADP-alpha-D-glucose = [(1-&gt;4)-alpha-D-glucosyl](n+1) + ADP + H(+). The protein operates within glycan biosynthesis; glycogen biosynthesis. Synthesizes alpha-1,4-glucan chains using ADP-glucose. This Aliivibrio salmonicida (strain LFI1238) (Vibrio salmonicida (strain LFI1238)) protein is Glycogen synthase.